The following is a 65-amino-acid chain: White colony protein WHS11 (65 aa).

Residues 1–17 (MSDLGRKDIGDKIESKL) show a composition bias toward basic and acidic residues. The disordered stretch occupies residues 1–32 (MSDLGRKDIGDKIESKLTPDSQKSTPEQFKDK). A compositionally biased stretch (polar residues) spans 18–27 (TPDSQKSTPE).

To yeast HSP12/GLP1 and S.pombe hsp9.

In Candida albicans (strain WO-1) (Yeast), this protein is White colony protein WHS11 (WHS11).